Consider the following 570-residue polypeptide: Periplasmic trehalase (570 aa).

Positions 1–34 (MIPPEIRRSVLLQKAIKLALAGTLLTFASFSATA) are cleaved as a signal peptide. Residues arginine 159, 166–167 (WD), asparagine 203, 212–214 (RSQ), 284–286 (RPE), and glycine 317 each bind substrate. Catalysis depends on proton donor/acceptor residues aspartate 319 and glutamate 503. Glutamate 518 is a substrate binding site. The interval 544–570 (KPCDSVPSTRPASLSATPTKTPSAATQ) is disordered. Positions 554 to 570 (PASLSATPTKTPSAATQ) are enriched in low complexity.

It belongs to the glycosyl hydrolase 37 family. As to quaternary structure, monomer.

It is found in the periplasm. It catalyses the reaction alpha,alpha-trehalose + H2O = alpha-D-glucose + beta-D-glucose. Functionally, provides the cells with the ability to utilize trehalose at high osmolarity by splitting it into glucose molecules that can subsequently be taken up by the phosphotransferase-mediated uptake system. In Salmonella newport (strain SL254), this protein is Periplasmic trehalase.